A 267-amino-acid chain; its full sequence is Ribosomal RNA large subunit methyltransferase E (267 aa).

Residues G52, F54, D72, D90, and D114 each contribute to the S-adenosyl-L-methionine site. Residue K154 is the Proton acceptor of the active site. Positions 212–252 are enriched in low complexity; the sequence is EAPRAPAPPEQAAAPEEATAPATRAARQKPAPAKKPAAAKR. The tract at residues 212–267 is disordered; it reads EAPRAPAPPEQAAAPEEATAPATRAARQKPAPAKKPAAAKRPAARKRAAKKPARRA. A compositionally biased stretch (basic residues) spans 253–267; it reads PAARKRAAKKPARRA.

It belongs to the class I-like SAM-binding methyltransferase superfamily. RNA methyltransferase RlmE family.

The protein localises to the cytoplasm. It catalyses the reaction uridine(2552) in 23S rRNA + S-adenosyl-L-methionine = 2'-O-methyluridine(2552) in 23S rRNA + S-adenosyl-L-homocysteine + H(+). Functionally, specifically methylates the uridine in position 2552 of 23S rRNA at the 2'-O position of the ribose in the fully assembled 50S ribosomal subunit. The sequence is that of Ribosomal RNA large subunit methyltransferase E from Anaeromyxobacter dehalogenans (strain 2CP-C).